The sequence spans 534 residues: Arginine--tRNA ligase (534 aa).

Positions Ala-120–His-130 match the 'HIGH' region motif.

The protein belongs to the class-I aminoacyl-tRNA synthetase family. Monomer.

The protein localises to the cytoplasm. The catalysed reaction is tRNA(Arg) + L-arginine + ATP = L-arginyl-tRNA(Arg) + AMP + diphosphate. This chain is Arginine--tRNA ligase, found in Mesomycoplasma hyopneumoniae (strain 7448) (Mycoplasma hyopneumoniae).